The sequence spans 282 residues: Shikimate dehydrogenase (NADP(+)) (282 aa).

Shikimate contacts are provided by residues 15–17 (SKS) and T62. K66 (proton acceptor) is an active-site residue. N87 and D103 together coordinate shikimate. NADP(+)-binding positions include 127–131 (GAGGA), 151–156 (NRTHTK), and M220. Y222 is a shikimate binding site. G244 provides a ligand contact to NADP(+).

Belongs to the shikimate dehydrogenase family. In terms of assembly, homodimer.

It catalyses the reaction shikimate + NADP(+) = 3-dehydroshikimate + NADPH + H(+). The protein operates within metabolic intermediate biosynthesis; chorismate biosynthesis; chorismate from D-erythrose 4-phosphate and phosphoenolpyruvate: step 4/7. Its function is as follows. Involved in the biosynthesis of the chorismate, which leads to the biosynthesis of aromatic amino acids. Catalyzes the reversible NADPH linked reduction of 3-dehydroshikimate (DHSA) to yield shikimate (SA). The sequence is that of Shikimate dehydrogenase (NADP(+)) from Shewanella baltica (strain OS223).